The sequence spans 138 residues: Small ribosomal subunit protein uS9 (138 aa).

Belongs to the universal ribosomal protein uS9 family.

This is Small ribosomal subunit protein uS9 (rps9) from Sulfolobus acidocaldarius (strain ATCC 33909 / DSM 639 / JCM 8929 / NBRC 15157 / NCIMB 11770).